The chain runs to 348 residues: Ephrin-4 (348 aa).

The first 20 residues, 1 to 20 (MKQFFEFLITTFLLLGLAAA), serve as a signal peptide directing secretion. An Ephrin RBD domain is found at 21–178 (DEHIVYWNST…SQNMRLSMKV (158 aa)). N28 carries an N-linked (GlcNAc...) asparagine glycan. 2 cysteine pairs are disulfide-bonded: C53–C91 and C79–C167. N157 is a glycosylation site (N-linked (GlcNAc...) asparagine). A disordered region spans residues 207–237 (GGQEDEDSDNDNAHLLPRDLEGSTNPKFRRP). S329 carries GPI-anchor amidated serine lipidation. Residues 330-348 (STSLSTNFAILLAVIYVLY) constitute a propeptide, removed in mature form.

The protein belongs to the ephrin family. In terms of assembly, interacts with lat-2. In terms of processing, may undergo proteolysis by metalloprotease sup-17 to give rise to a soluble form.

The protein localises to the cell membrane. Regulates the formation or stabilization of cell-cell contacts at several stages of epithelial morphogenesis. In early embryonic development, involved in ventral closure of the epidermis. During male tail morphogenesis, regulates precursor cell sorting together with mab-20 and allows the formation of distinct sensory rays. Probably acts as a ligand for lad-2 to regulate axon guidance of several neurons including SDQL, SDQR, SMD and PLN neurons during neurogenesis. This chain is Ephrin-4 (efn-4), found in Caenorhabditis elegans.